Here is a 214-residue protein sequence, read N- to C-terminus: Probable chemoreceptor glutamine deamidase CheD (214 aa).

It belongs to the CheD family.

The enzyme catalyses L-glutaminyl-[protein] + H2O = L-glutamyl-[protein] + NH4(+). Probably deamidates glutamine residues to glutamate on methyl-accepting chemotaxis receptors (MCPs), playing an important role in chemotaxis. The sequence is that of Probable chemoreceptor glutamine deamidase CheD from Vibrio vulnificus (strain CMCP6).